The chain runs to 470 residues: Heparan-sulfate 6-O-sulfotransferase 3 (470 aa).

Over 1–4 (MDER) the chain is Cytoplasmic. The helical; Signal-anchor for type II membrane protein transmembrane segment at 5–27 (FNKWLLTPVLTLLFVVIMYQYVS) threads the bilayer. Topologically, residues 28–470 (PSCTSSCTNF…EDYNSQVVRW (443 aa)) are lumenal. The interval 36-121 (NFGEQLRSGE…EAPENGSLPR (86 aa)) is disordered. Residues 88-113 (PEDEDEDPGDPEEEEEEEEEEPDPEA) show a composition bias toward acidic residues. N-linked (GlcNAc...) asparagine glycans are attached at residues Asn-116 and Asn-127. A 3'-phosphoadenylyl sulfate-binding site is contributed by 151–159 (HIQKTGGTT). Substrate-binding positions include 181–182 (KK), Arg-198, Trp-203, and His-208. Catalysis depends on His-208, which acts as the Proton acceptor. A glycan (N-linked (GlcNAc...) asparagine) is linked at Asn-230. 3'-phosphoadenylyl sulfate contacts are provided by Arg-244 and Ser-252. 2 residues coordinate substrate: His-256 and Trp-263. 2 N-linked (GlcNAc...) asparagine glycosylation sites follow: Asn-323 and Asn-328. Residue 376–378 (TQF) participates in 3'-phosphoadenylyl sulfate binding. Asn-379 carries N-linked (GlcNAc...) asparagine glycosylation. 3'-phosphoadenylyl sulfate is bound at residue 382-383 (RA). The disordered stretch occupies residues 421–453 (TKQLEHQRDRQKRREERRLQREHRAHRWPKEDR). The span at 422–439 (KQLEHQRDRQKRREERRL) shows a compositional bias: basic and acidic residues.

This sequence belongs to the sulfotransferase 6 family. As to expression, ubiquitously expressed.

The protein localises to the membrane. The enzyme catalyses alpha-D-glucosaminyl-[heparan sulfate](n) + 3'-phosphoadenylyl sulfate = 6-sulfo-alpha-D-glucosaminyl-[heparan sulfate](n) + adenosine 3',5'-bisphosphate + H(+). Its function is as follows. 6-O-sulfation enzyme which catalyzes the transfer of sulfate from 3'-phosphoadenosine 5'-phosphosulfate (PAPS) to position 6 of the N-sulfoglucosamine residue (GlcNS) of heparan sulfate. The polypeptide is Heparan-sulfate 6-O-sulfotransferase 3 (Hs6st3) (Mus musculus (Mouse)).